We begin with the raw amino-acid sequence, 325 residues long: MSETASWQPSAPIANLLKRAAIMAEIRRFFADRGVLEVETPTMSQATVTDIHLVPFQTRFVGPGAADGLTLYMMTSPEYHMKRLLAAGSGSIYQLGRSFRNEEAGRHHNPEFTMLEWYRPHYDMYRLMDEVEDLLQQILDCDSSERLSYQQAFLRHLDIDPLSADKAQLREAAAKLDLSNIADTEEDRDTLLQLLFTVGVEPHIGRDKPAFVYHFPASQASLAVISTEDHRVAERFEVYFKGIELANGFHELTDGDEQLKRFEQDNRSREKRGLPQHPIDMNLIDALKHGLPDCSGVALGVDRLVMLALGAEKLSDVIAFPVGRA.

76–78 (SPE) serves as a coordination point for substrate. Residues 100–102 (RNE) and Asn-109 each bind ATP. Position 118 (Tyr-118) interacts with substrate. Position 244 to 245 (244 to 245 (EL)) interacts with ATP. Glu-251 is a substrate binding site. Gly-300 contributes to the ATP binding site.

The protein belongs to the class-II aminoacyl-tRNA synthetase family. EpmA subfamily. As to quaternary structure, homodimer.

The catalysed reaction is D-beta-lysine + L-lysyl-[protein] + ATP = N(6)-((3R)-3,6-diaminohexanoyl)-L-lysyl-[protein] + AMP + diphosphate + H(+). Its function is as follows. With EpmB is involved in the beta-lysylation step of the post-translational modification of translation elongation factor P (EF-P). Catalyzes the ATP-dependent activation of (R)-beta-lysine produced by EpmB, forming a lysyl-adenylate, from which the beta-lysyl moiety is then transferred to the epsilon-amino group of a conserved specific lysine residue in EF-P. This Yersinia enterocolitica serotype O:8 / biotype 1B (strain NCTC 13174 / 8081) protein is Elongation factor P--(R)-beta-lysine ligase.